The primary structure comprises 288 residues: Scolexin B (288 aa).

The N-terminal stretch at 1–20 is a signal peptide; sequence MFASKLAVCSALALLAVAHA. One can recognise a Peptidase S1 domain in the interval 21-287; that stretch reads APGGNDIQKI…VRDWIKKVTN (267 aa). A disordered region spans residues 27-56; it reads IQKITKAPNVPTKAEGDAASKASAPAIPPK. The cysteines at positions 72 and 88 are disulfide-linked. Active-site charge relay system residues include His87 and Asp145. Cystine bridges form between Cys210/Cys223 and Cys235/Cys264. Residue Ser239 is the Charge relay system of the active site.

It belongs to the peptidase S1 family.

The protein is Scolexin B of Heliothis virescens (Tobacco budworm moth).